The following is a 395-amino-acid chain: Elongation factor Tu (395 aa).

Residues 10-204 (KPHVNVGTIG…AVDAYIDTPL (195 aa)) form the tr-type G domain. Positions 19–26 (GHVDHGKT) are G1. 19–26 (GHVDHGKT) provides a ligand contact to GTP. Thr26 contributes to the Mg(2+) binding site. Residues 60-64 (GITIN) are G2. Positions 81–84 (DCPG) are G3. Residues 81-85 (DCPGH) and 136-139 (NKAD) each bind GTP. The segment at 136 to 139 (NKAD) is G4. The segment at 174 to 176 (SAL) is G5.

The protein belongs to the TRAFAC class translation factor GTPase superfamily. Classic translation factor GTPase family. EF-Tu/EF-1A subfamily. In terms of assembly, monomer.

The protein localises to the cytoplasm. The enzyme catalyses GTP + H2O = GDP + phosphate + H(+). GTP hydrolase that promotes the GTP-dependent binding of aminoacyl-tRNA to the A-site of ribosomes during protein biosynthesis. This chain is Elongation factor Tu, found in Acholeplasma laidlawii (strain PG-8A).